We begin with the raw amino-acid sequence, 423 residues long: GTPase HflX (423 aa).

Positions 201 to 363 constitute a Hflx-type G domain; sequence IQLALVGYTN…KIEQALKGMM (163 aa). Residues 207 to 214, 232 to 236, 254 to 257, 320 to 323, and 341 to 343 contribute to the GTP site; these read GYTNAGKS, FATLD, DTVG, NKAD, and SAY. Mg(2+) is bound by residues Ser-214 and Thr-234.

This sequence belongs to the TRAFAC class OBG-HflX-like GTPase superfamily. HflX GTPase family. In terms of assembly, monomer. Associates with the 50S ribosomal subunit. Mg(2+) serves as cofactor.

The protein resides in the cytoplasm. GTPase that associates with the 50S ribosomal subunit and may have a role during protein synthesis or ribosome biogenesis. The polypeptide is GTPase HflX (Alkalihalophilus pseudofirmus (strain ATCC BAA-2126 / JCM 17055 / OF4) (Bacillus pseudofirmus)).